The chain runs to 244 residues: Lipid A 1-phosphatase (244 aa).

Helical transmembrane passes span 28 to 48, 60 to 80, 98 to 118, 154 to 174, 178 to 198, and 201 to 221; these read LFVT…PIGA, ELLT…LLFF, ALYV…SGLL, FPSG…LLFP, VAFI…GAHY, and DVIA…IVFA.

This sequence belongs to the lipid A LpxE 1-phosphatase family.

The protein resides in the cell inner membrane. It participates in bacterial outer membrane biogenesis; LPS lipid A biosynthesis. Removes the 1-phosphate group from (tetraacyl) lipid A species, has no requirement for the Kdo(2) moiety of lipid A. Has no 4'-phosphatase activity. Reduces sensitivity of S.meliloti strain 1021 to the cationic antimicrobial peptide (CAMP) polymyxin B. This Rhizobium johnstonii (strain DSM 114642 / LMG 32736 / 3841) (Rhizobium leguminosarum bv. viciae) protein is Lipid A 1-phosphatase.